The sequence spans 237 residues: N-alpha-acetyltransferase 40 (237 aa).

Glycine 2 is lipidated: N-myristoyl glycine. The 154-residue stretch at 63–216 (SGLEPATVDW…EDCSYEILSR (154 aa)) folds into the N-acetyltransferase domain. Residues tyrosine 85, 127 to 129 (DVE), and tyrosine 138 each bind substrate. Residues 140 to 142 (VQL) and 148 to 153 (RKGLGK) each bind acetyl-CoA. Threonine 174 contributes to the substrate binding site. Asparagine 179 provides a ligand contact to acetyl-CoA. The substrate site is built by serine 197 and tyrosine 211.

The protein belongs to the acetyltransferase family. NAA40 subfamily. As to expression, widely expressed; with the highest expression level in liver and the lowest expression in brain (at protein level).

Its subcellular location is the cytoplasm. It localises to the nucleus. It carries out the reaction N-terminal L-seryl-[histone H4] + acetyl-CoA = N-terminal N(alpha)-acetyl-L-seryl-[histone H4] + CoA + H(+). The enzyme catalyses N-terminal L-seryl-[histone H2A] + acetyl-CoA = N-terminal N(alpha)-acetyl-L-seryl-[histone H2A] + CoA + H(+). In terms of biological role, N-alpha-acetyltransferase that specifically mediates the acetylation of the N-terminal residues of histones H4 and H2A. In contrast to other N-alpha-acetyltransferase, has a very specific selectivity for histones H4 and H2A N-terminus and specifically recognizes the 'Ser-Gly-Arg-Gly sequence'. Acts as a negative regulator of apoptosis. May play a role in hepatic lipid metabolism. This Homo sapiens (Human) protein is N-alpha-acetyltransferase 40.